A 356-amino-acid polypeptide reads, in one-letter code: 1-deoxy-D-xylulose 5-phosphate reductoisomerase (356 aa).

The NADPH site is built by T7, G8, S9, I10, G31, N33, and N111. Position 112 (K112) interacts with 1-deoxy-D-xylulose 5-phosphate. Residue E113 coordinates NADPH. D131 is a Mn(2+) binding site. S132, E133, S155, and H178 together coordinate 1-deoxy-D-xylulose 5-phosphate. A Mn(2+)-binding site is contributed by E133. G184 serves as a coordination point for NADPH. S191, N196, K197, and E200 together coordinate 1-deoxy-D-xylulose 5-phosphate. E200 contacts Mn(2+).

The protein belongs to the DXR family. It depends on Mg(2+) as a cofactor. Mn(2+) is required as a cofactor.

The enzyme catalyses 2-C-methyl-D-erythritol 4-phosphate + NADP(+) = 1-deoxy-D-xylulose 5-phosphate + NADPH + H(+). The protein operates within isoprenoid biosynthesis; isopentenyl diphosphate biosynthesis via DXP pathway; isopentenyl diphosphate from 1-deoxy-D-xylulose 5-phosphate: step 1/6. In terms of biological role, catalyzes the NADPH-dependent rearrangement and reduction of 1-deoxy-D-xylulose-5-phosphate (DXP) to 2-C-methyl-D-erythritol 4-phosphate (MEP). The protein is 1-deoxy-D-xylulose 5-phosphate reductoisomerase of Campylobacter jejuni (strain RM1221).